The sequence spans 118 residues: Membrane-anchored ubiquitin-fold protein 3 (118 aa).

The Ubiquitin-like domain maps to 7–73 (IDIKFRLYDG…LENNKTVGQC (67 aa)). A lipid anchor (S-palmitoyl cysteine) is attached at Cys113. At Cys115 the chain carries Cysteine methyl ester. Residue Cys115 is the site of S-geranylgeranyl cysteine attachment. A propeptide spans 116-118 (TIL) (removed in mature form).

As to expression, ubiquitous, but three fold higher expression in senescing leaves.

The protein resides in the cell membrane. Its function is as follows. May serve as docking site to facilitate the association of other proteins to the plasma membrane. The chain is Membrane-anchored ubiquitin-fold protein 3 (MUB3) from Arabidopsis thaliana (Mouse-ear cress).